A 300-amino-acid polypeptide reads, in one-letter code: Ribosomal RNA small subunit methyltransferase H (300 aa).

S-adenosyl-L-methionine contacts are provided by residues 38 to 40 (GGH), glutamate 55, isoleucine 85, aspartate 102, and histidine 109.

The protein belongs to the methyltransferase superfamily. RsmH family.

Its subcellular location is the cytoplasm. The enzyme catalyses cytidine(1402) in 16S rRNA + S-adenosyl-L-methionine = N(4)-methylcytidine(1402) in 16S rRNA + S-adenosyl-L-homocysteine + H(+). Functionally, specifically methylates the N4 position of cytidine in position 1402 (C1402) of 16S rRNA. This is Ribosomal RNA small subunit methyltransferase H from Brachyspira hyodysenteriae (strain ATCC 49526 / WA1).